Here is a 412-residue protein sequence, read N- to C-terminus: Peptidase T (412 aa).

Zn(2+) is bound at residue His-78. Asp-80 is a catalytic residue. Residue Asp-140 participates in Zn(2+) binding. The active-site Proton acceptor is Glu-174. Glu-175, Asp-197, and His-379 together coordinate Zn(2+).

Belongs to the peptidase M20B family. Zn(2+) serves as cofactor.

It is found in the cytoplasm. It carries out the reaction Release of the N-terminal residue from a tripeptide.. In terms of biological role, cleaves the N-terminal amino acid of tripeptides. This Staphylococcus epidermidis (strain ATCC 12228 / FDA PCI 1200) protein is Peptidase T.